The following is a 385-amino-acid chain: Meiotic recombination protein SPO11-2 (385 aa).

The 146-residue stretch at Leu24–Ala169 folds into the Topo IIA-type catalytic domain. Tyr126 functions as the O-(5'-phospho-DNA)-tyrosine intermediate in the catalytic mechanism. Mg(2+)-binding residues include Glu219 and Asp272.

This sequence belongs to the TOP6A family. Interacts with TOP6B. Requires Mg(2+) as cofactor. Highly expressed in flowers before pollination. Expressed in roots and shoots.

The protein localises to the nucleus. It carries out the reaction ATP-dependent breakage, passage and rejoining of double-stranded DNA.. Required for meiotic recombination. Mediates DNA cleavage that forms the double-strand breaks (DSB) that initiate meiotic recombination. This Oryza sativa subsp. indica (Rice) protein is Meiotic recombination protein SPO11-2 (SPO11-2).